Consider the following 140-residue polypeptide: Mediator of RNA polymerase II transcription subunit 21 (140 aa).

Positions 52–130 (EERERTLEEL…CDELILKLAQ (79 aa)) form a coiled coil.

This sequence belongs to the Mediator complex subunit 21 family. In terms of assembly, component of the Mediator complex.

It is found in the nucleus. Functionally, component of the Mediator complex, a coactivator involved in the regulated transcription of nearly all RNA polymerase II-dependent genes. Mediator functions as a bridge to convey information from gene-specific regulatory proteins to the basal RNA polymerase II transcription machinery. Mediator is recruited to promoters by direct interactions with regulatory proteins and serves as a scaffold for the assembly of a functional preinitiation complex with RNA polymerase II and the general transcription factors. The polypeptide is Mediator of RNA polymerase II transcription subunit 21 (SRB7) (Yarrowia lipolytica (strain CLIB 122 / E 150) (Yeast)).